The primary structure comprises 205 residues: Ribosome maturation factor RimP (205 aa).

This sequence belongs to the RimP family.

It is found in the cytoplasm. Functionally, required for maturation of 30S ribosomal subunits. The polypeptide is Ribosome maturation factor RimP (Sinorhizobium medicae (strain WSM419) (Ensifer medicae)).